The chain runs to 119 residues: uncharacterized protein (119 aa).

A signal peptide spans 1 to 30 (MCPECFFLMLCFCGYCSSSSSSFRSSPVYG).

This is an uncharacterized protein from Escherichia coli (strain UTI89 / UPEC).